A 224-amino-acid polypeptide reads, in one-letter code: V-type ATP synthase subunit D (224 aa).

A compositionally biased stretch (basic and acidic residues) spans 205–214 (AKAKQQRKDI). The tract at residues 205-224 (AKAKQQRKDIQSGNHGSAAD) is disordered. Residues 215–224 (QSGNHGSAAD) show a composition bias toward polar residues.

The protein belongs to the V-ATPase D subunit family.

In terms of biological role, produces ATP from ADP in the presence of a proton gradient across the membrane. The chain is V-type ATP synthase subunit D from Deinococcus deserti (strain DSM 17065 / CIP 109153 / LMG 22923 / VCD115).